The sequence spans 225 residues: tRNA (guanine-N(1)-)-methyltransferase (225 aa).

S-adenosyl-L-methionine is bound by residues Gly112 and 132 to 137; that span reads IGDYVL.

This sequence belongs to the RNA methyltransferase TrmD family. In terms of assembly, homodimer.

It is found in the cytoplasm. It catalyses the reaction guanosine(37) in tRNA + S-adenosyl-L-methionine = N(1)-methylguanosine(37) in tRNA + S-adenosyl-L-homocysteine + H(+). Its function is as follows. Specifically methylates guanosine-37 in various tRNAs. This is tRNA (guanine-N(1)-)-methyltransferase from Flavobacterium psychrophilum (strain ATCC 49511 / DSM 21280 / CIP 103535 / JIP02/86).